A 248-amino-acid polypeptide reads, in one-letter code: 1-(5-phosphoribosyl)-5-[(5-phosphoribosylamino)methylideneamino] imidazole-4-carboxamide isomerase (248 aa).

Asp-8 (proton acceptor) is an active-site residue. Residue Asp-131 is the Proton donor of the active site.

It belongs to the HisA/HisF family.

The protein localises to the cytoplasm. The catalysed reaction is 1-(5-phospho-beta-D-ribosyl)-5-[(5-phospho-beta-D-ribosylamino)methylideneamino]imidazole-4-carboxamide = 5-[(5-phospho-1-deoxy-D-ribulos-1-ylimino)methylamino]-1-(5-phospho-beta-D-ribosyl)imidazole-4-carboxamide. It functions in the pathway amino-acid biosynthesis; L-histidine biosynthesis; L-histidine from 5-phospho-alpha-D-ribose 1-diphosphate: step 4/9. This Nitrosomonas eutropha (strain DSM 101675 / C91 / Nm57) protein is 1-(5-phosphoribosyl)-5-[(5-phosphoribosylamino)methylideneamino] imidazole-4-carboxamide isomerase.